A 409-amino-acid chain; its full sequence is tRNA(Met) cytidine acetate ligase (409 aa).

ATP is bound by residues 7–20 (VVEY…HLYH), Gly102, Asn169, and Arg194.

The protein belongs to the TmcAL family.

Its subcellular location is the cytoplasm. It carries out the reaction cytidine(34) in elongator tRNA(Met) + acetate + ATP = N(4)-acetylcytidine(34) in elongator tRNA(Met) + AMP + diphosphate. Its function is as follows. Catalyzes the formation of N(4)-acetylcytidine (ac(4)C) at the wobble position of elongator tRNA(Met), using acetate and ATP as substrates. First activates an acetate ion to form acetyladenylate (Ac-AMP) and then transfers the acetyl group to tRNA to form ac(4)C34. The polypeptide is tRNA(Met) cytidine acetate ligase (Clostridium botulinum (strain Kyoto / Type A2)).